Reading from the N-terminus, the 169-residue chain is Regulator of ribonuclease activity A (169 aa).

This sequence belongs to the RraA family. As to quaternary structure, homotrimer. Binds to both RNA-binding sites in the C-terminal region of Rne and to RhlB.

The protein localises to the cytoplasm. Globally modulates RNA abundance by binding to RNase E (Rne) and regulating its endonucleolytic activity. Can modulate Rne action in a substrate-dependent manner by altering the composition of the degradosome. Modulates RNA-binding and helicase activities of the degradosome. This is Regulator of ribonuclease activity A from Photorhabdus laumondii subsp. laumondii (strain DSM 15139 / CIP 105565 / TT01) (Photorhabdus luminescens subsp. laumondii).